The primary structure comprises 514 residues: Maturase K (514 aa).

It belongs to the intron maturase 2 family. MatK subfamily.

It localises to the plastid. It is found in the chloroplast. Its function is as follows. Usually encoded in the trnK tRNA gene intron. Probably assists in splicing its own and other chloroplast group II introns. In Dioon spinulosum (Gum palm), this protein is Maturase K.